We begin with the raw amino-acid sequence, 215 residues long: V-type ATP synthase subunit D (215 aa).

The protein belongs to the V-ATPase D subunit family.

Its function is as follows. Produces ATP from ADP in the presence of a proton gradient across the membrane. The polypeptide is V-type ATP synthase subunit D (Anaeromyxobacter sp. (strain Fw109-5)).